The following is a 315-amino-acid chain: ADP/ATP translocase (315 aa).

The Mitochondrial intermembrane portion of the chain corresponds to methionine 1–proline 13. Solcar repeat units lie at residues proline 13–methionine 106 and lysine 118–valine 210. The helical transmembrane segment at proline 14–glutamate 37 threads the bilayer. Bongkrekate is bound at residue lysine 30. At arginine 38–arginine 80 the chain is on the mitochondrial matrix side. Residues isoleucine 62 and glycine 81 to threonine 83 each bind a cardiolipin. Residues glycine 81 to lysine 104 traverse the membrane as a helical segment. Arginine 88 contacts ADP. Bongkrekate contacts are provided by residues arginine 88–tyrosine 89 and asparagine 96. Over alanine 105–glycine 115 the chain is Mitochondrial intermembrane. A helical membrane pass occupies residues tyrosine 116–arginine 145. At threonine 146–arginine 184 the chain is on the mitochondrial matrix side. Residues leucine 166 and arginine 184–glycine 185 each bind a cardiolipin. The chain crosses the membrane as a helical span at residues glycine 185–valine 213. Residue tyrosine 196–arginine 197 coordinates bongkrekate. The Mitochondrial intermembrane segment spans residues glycine 214–leucine 216. Residues alanine 217–aspartate 242 traverse the membrane as a helical segment. The stretch at asparagine 218 to leucine 304 is one Solcar repeat. Residues threonine 243 to alanine 283 are Mitochondrial matrix-facing. Arginine 245 is a binding site for ADP. The Nucleotide carrier signature motif motif lies at arginine 245–methionine 250. A cardiolipin contacts are provided by residues serine 260–serine 261 and glycine 280–glycine 282. Residues asparagine 284–leucine 304 form a helical membrane-spanning segment. The Mitochondrial intermembrane segment spans residues leucine 305–glycine 315.

It belongs to the mitochondrial carrier (TC 2.A.29) family. Monomer.

It localises to the mitochondrion inner membrane. The catalysed reaction is ADP(in) + ATP(out) = ADP(out) + ATP(in). With respect to regulation, the matrix-open state (m-state) is inhibited by the membrane-permeable bongkrekic acid (BKA). The cytoplasmic-open state (c-state) is inhibited by the membrane-impermeable toxic inhibitor carboxyatractyloside (CATR). ADP:ATP antiporter that mediates import of ADP into the mitochondrial matrix for ATP synthesis, and export of ATP out to fuel the cell. Cycles between the cytoplasmic-open state (c-state) and the matrix-open state (m-state): operates by the alternating access mechanism with a single substrate-binding site intermittently exposed to either the cytosolic (c-state) or matrix (m-state) side of the inner mitochondrial membrane. The polypeptide is ADP/ATP translocase (Thermothelomyces thermophilus (strain ATCC 42464 / BCRC 31852 / DSM 1799) (Sporotrichum thermophile)).